The sequence spans 243 residues: 1-(5-phosphoribosyl)-5-[(5-phosphoribosylamino)methylideneamino] imidazole-4-carboxamide isomerase (243 aa).

The Proton acceptor role is filled by Asp-8. The active-site Proton donor is Asp-130.

The protein belongs to the HisA/HisF family.

It is found in the cytoplasm. It catalyses the reaction 1-(5-phospho-beta-D-ribosyl)-5-[(5-phospho-beta-D-ribosylamino)methylideneamino]imidazole-4-carboxamide = 5-[(5-phospho-1-deoxy-D-ribulos-1-ylimino)methylamino]-1-(5-phospho-beta-D-ribosyl)imidazole-4-carboxamide. The protein operates within amino-acid biosynthesis; L-histidine biosynthesis; L-histidine from 5-phospho-alpha-D-ribose 1-diphosphate: step 4/9. This is 1-(5-phosphoribosyl)-5-[(5-phosphoribosylamino)methylideneamino] imidazole-4-carboxamide isomerase from Methylococcus capsulatus (strain ATCC 33009 / NCIMB 11132 / Bath).